Consider the following 388-residue polypeptide: Succinate--CoA ligase [ADP-forming] subunit beta (388 aa).

In terms of domain architecture, ATP-grasp spans 9-244 (KALFAEYGLP…PSQDDAREAH (236 aa)). ATP is bound by residues lysine 46, 53 to 55 (GRG), glutamate 99, threonine 102, and glutamate 107. Residues asparagine 199 and aspartate 213 each contribute to the Mg(2+) site. Residues asparagine 264 and 321 to 323 (GIV) each bind substrate.

Belongs to the succinate/malate CoA ligase beta subunit family. In terms of assembly, heterotetramer of two alpha and two beta subunits. Requires Mg(2+) as cofactor.

It carries out the reaction succinate + ATP + CoA = succinyl-CoA + ADP + phosphate. The enzyme catalyses GTP + succinate + CoA = succinyl-CoA + GDP + phosphate. It functions in the pathway carbohydrate metabolism; tricarboxylic acid cycle; succinate from succinyl-CoA (ligase route): step 1/1. Succinyl-CoA synthetase functions in the citric acid cycle (TCA), coupling the hydrolysis of succinyl-CoA to the synthesis of either ATP or GTP and thus represents the only step of substrate-level phosphorylation in the TCA. The beta subunit provides nucleotide specificity of the enzyme and binds the substrate succinate, while the binding sites for coenzyme A and phosphate are found in the alpha subunit. In Shewanella sediminis (strain HAW-EB3), this protein is Succinate--CoA ligase [ADP-forming] subunit beta.